The sequence spans 67 residues: Small ribosomal subunit protein eS27 (67 aa).

Cys-22, Cys-25, Cys-41, and Cys-44 together coordinate Zn(2+). The C4-type zinc finger occupies 22-44 (CPDCGNEQVVFSHAAMVVRCLVC).

This sequence belongs to the eukaryotic ribosomal protein eS27 family. As to quaternary structure, part of the 30S ribosomal subunit. Zn(2+) serves as cofactor.

In Pyrobaculum islandicum (strain DSM 4184 / JCM 9189 / GEO3), this protein is Small ribosomal subunit protein eS27.